Reading from the N-terminus, the 702-residue chain is Glucoamylase (702 aa).

An N-terminal signal peptide occupies residues 1 to 21 (MSRKLIKYLPLLVLASSVLSG). Cys-22 carries N-palmitoyl cysteine lipidation. Cys-22 carries the S-diacylglycerol cysteine lipid modification. Residue Trp-342 participates in substrate binding. Glu-452 (proton acceptor) is an active-site residue. The Proton donor role is filled by Glu-455.

Belongs to the glycosyl hydrolase 15 family.

Its subcellular location is the cell membrane. The catalysed reaction is Hydrolysis of terminal (1-&gt;4)-linked alpha-D-glucose residues successively from non-reducing ends of the chains with release of beta-D-glucose.. Functionally, CGA has typical kinetic properties for a glucoamylase, but this bacterial enzyme had higher isomaltose-hydrolyzing activity than other eukaryotic glucoamylases. The polypeptide is Glucoamylase (cga) (Clostridium sp. (strain G0005)).